A 345-amino-acid chain; its full sequence is uncharacterized protein (345 aa).

Belongs to the methyltransferase superfamily.

This is an uncharacterized protein from Streptomyces fradiae (Streptomyces roseoflavus).